The following is a 400-amino-acid chain: Probable phospho-2-dehydro-3-deoxyheptonate aldolase (400 aa).

Belongs to the class-II DAHP synthase family.

The catalysed reaction is D-erythrose 4-phosphate + phosphoenolpyruvate + H2O = 7-phospho-2-dehydro-3-deoxy-D-arabino-heptonate + phosphate. Its pathway is antibiotic biosynthesis; phenazine biosynthesis. This chain is Probable phospho-2-dehydro-3-deoxyheptonate aldolase (phzC), found in Pseudomonas fluorescens.